We begin with the raw amino-acid sequence, 95 residues long: Co-chaperonin GroES (95 aa).

It belongs to the GroES chaperonin family. As to quaternary structure, heptamer of 7 subunits arranged in a ring. Interacts with the chaperonin GroEL.

Its subcellular location is the cytoplasm. Its function is as follows. Together with the chaperonin GroEL, plays an essential role in assisting protein folding. The GroEL-GroES system forms a nano-cage that allows encapsulation of the non-native substrate proteins and provides a physical environment optimized to promote and accelerate protein folding. GroES binds to the apical surface of the GroEL ring, thereby capping the opening of the GroEL channel. The protein is Co-chaperonin GroES of Chlorobium phaeovibrioides (strain DSM 265 / 1930) (Prosthecochloris vibrioformis (strain DSM 265)).